The sequence spans 122 residues: Biogenesis of lysosome-related organelles complex 1 subunit BLS1 (122 aa).

Ser33 is modified (phosphoserine).

It belongs to the BLOC1S1 family. Component of the biogenesis of lysosome-related organelles complex-1 (BLOC-1) composed of at least BLI1, BLS1, CNL1, KXD1, SNN1 and VAB2.

Its subcellular location is the endosome. Component of the biogenesis of lysosome-related organelles complex-1 (BLOC-1), a complex involved in endosomal cargo sorting. The chain is Biogenesis of lysosome-related organelles complex 1 subunit BLS1 (BLS1) from Saccharomyces cerevisiae (strain RM11-1a) (Baker's yeast).